The sequence spans 516 residues: MVRKIFQTNAELKDWLSEQNSAIIFIPTMGGLHPGHQYLIQKAKERKTNTNQIILVSIFVNPLQFSKGEDFKKYPRNINRDAELAFSAGADAIWAPDYDEVFPGGADSHFKIEVPKTLHNQLCGAERKGHFDGVATVIIRLIKIIKPKKLVLGEKDWQQLIIIRKLFQELSIPVKIESYSTQRDQSGFAYSSRNSYLSDSERVNAQSLPNAIKEAKTEFDKGKVINLTKIASIFKENNLKIEYLKIVDPFSLKETENINRLCLLAVAVKCGSTRLIDHTFLMHRKPIIAIDGPAGAGKSTVTKAFAKKLGFIYLDTGAMYRAVTWLIISNSIDPNDQVEIKNILKDSKLEFKSSSFVEQKIFINNIDVTEKIRSPKVTSMVSEIAKQQFVRELLTRKQQVIGNNGGLVAEGRDIGTAVFPDADLKIFLTASPTERAKRRALDLHKRGYEFSSIEDLEKEIKERDKKDSERKIAPLKKAQDAIELVTDGMNIEDVLKELIDIFRSKIPEEVWPTPNS.

The interval 1–279 (MVRKIFQTNA…CGSTRLIDHT (279 aa)) is pantoate--beta-alanine ligase. 29-36 (MGGLHPGH) contacts ATP. H36 serves as the catalytic Proton donor. Q64 provides a ligand contact to (R)-pantoate. Q64 serves as a coordination point for beta-alanine. 153–156 (GEKD) lines the ATP pocket. Residue Q159 participates in (R)-pantoate binding. Residue 190–193 (YSSR) participates in ATP binding. Positions 280-516 (FLMHRKPIIA…PEEVWPTPNS (237 aa)) are cytidylate kinase.

This sequence in the N-terminal section; belongs to the pantothenate synthetase family. It in the C-terminal section; belongs to the cytidylate kinase family. Type 1 subfamily.

It localises to the cytoplasm. It catalyses the reaction (R)-pantoate + beta-alanine + ATP = (R)-pantothenate + AMP + diphosphate + H(+). The catalysed reaction is CMP + ATP = CDP + ADP. The enzyme catalyses dCMP + ATP = dCDP + ADP. The protein operates within cofactor biosynthesis; (R)-pantothenate biosynthesis; (R)-pantothenate from (R)-pantoate and beta-alanine: step 1/1. Catalyzes the condensation of pantoate with beta-alanine in an ATP-dependent reaction via a pantoyl-adenylate intermediate. In terms of biological role, catalyzes the transfer of a phosphate group from ATP to either CMP or dCMP to form CDP or dCDP and ADP, respectively. The polypeptide is Bifunctional pantoate ligase/cytidylate kinase (Prochlorococcus marinus (strain NATL1A)).